We begin with the raw amino-acid sequence, 814 residues long: MKVKVSGEYTLAEIEVELDQQLTPDDLQPGATVLATNESTGGLERIVSHEELSRFFAVGPAGALPMPTDVVVERTLADPAFKQILQEADGKKGFDPQAEQMKIRDFLAGVTSSKMTTEQSVFHGSRSNSSASTVNRIKCPTCLVQFDAVAFQNHSCEAKPIEVAVPQQEKPHLVPTVSAPPAPLSKPASERVIRENQVRLRRYIKDEMKYDLATGIESSRKNAAKGPNECTMCDRKFVHASGLVRHMEKHALDLIPSQTSEQPHTIPAAGLHVVVKCNSCGRIFYDPQVAFRHGLIHDSEHSTMRQSPMTQVPSNRADFNELLLDGEMLIDNDPAFATSNQNTNPPKKEMFSSLILGSVLQCEFCEYIFADIAELLVHSASHVAERRFECTACDIQMNTAKEASIHFQTDCIFMREAIRSLNVTLSRYFVCNVCELKFANTDLLQEHRCTSFHYFPRLNENGKKLLLPCDFCDVNFEFAHDFLAHSEEKHLNKKKREKETRNTGAGRIRQYLCDICGKSYTQSSHLWQHLRFHQGVKPFVCQEENCDRKFTIRPDLNDHIRKCHTGERPYLCLVCGKRFLTGSVFYQHRLIHRGERRYECEECGKRFYRADALKNHQRIHTGEKPYSCLFCTKTFRQRGDRDKHIRARHSHLDANSRLMMQMQKFQLETAAAQKAQSHNPEQQDNDVAGGASTSDVPSGSGFMSTEPSVAEMQYSITPEQQEEMVCVPIDEVNNSFFMSHYMQAVPMEEDGSGQHIIVFEQPGQNMDMMSIYDQQQVGEPMHESGVPKRPAEENARVVVVKNNPTKPIFSDTYL.

C2H2-type zinc fingers lie at residues 228–250 (NECT…MEKH), 275–297 (VKCN…GLIH), 360–382 (LQCE…SASH), 429–453 (FVCN…TSFH), 467–490 (LPCD…EEKH), 511–533 (YLCD…LRFH), 539–564 (FVCQ…RKCH), 570–592 (YLCL…RLIH), 598–620 (YECE…QRIH), and 626–649 (YSCL…RARH). Residues 669 to 705 (TAAAQKAQSHNPEQQDNDVAGGASTSDVPSGSGFMST) form a disordered region. Polar residues predominate over residues 691–705 (ASTSDVPSGSGFMST).

In terms of assembly, interacts with comr. In terms of tissue distribution, expressed in testis; primary spermatocytes.

The protein resides in the nucleus. Its function is as follows. Required for male meiotic division and spermatid differentiation. Required for accumulation of aly and comr on chromatin. May function as a transcription factor. This is Testis-specific zinc finger protein topi (topi) from Drosophila melanogaster (Fruit fly).